We begin with the raw amino-acid sequence, 246 residues long: Proteasome subunit alpha type-5 (246 aa).

The protein belongs to the peptidase T1A family. The 26S proteasome consists of a 20S proteasome core and two 19S regulatory subunits. The 20S proteasome core is composed of 28 subunits that are arranged in four stacked rings, resulting in a barrel-shaped structure. The two end rings are each formed by seven alpha subunits, and the two central rings are each formed by seven beta subunits. The catalytic chamber with the active sites is on the inside of the barrel.

The protein localises to the cytoplasm. It is found in the nucleus. Its function is as follows. The proteasome is a multicatalytic proteinase complex which is characterized by its ability to cleave peptides with Arg, Phe, Tyr, Leu, and Glu adjacent to the leaving group at neutral or slightly basic pH. The proteasome has an ATP-dependent proteolytic activity. This Trypanosoma brucei brucei protein is Proteasome subunit alpha type-5.